A 534-amino-acid polypeptide reads, in one-letter code: Autophagic-related protein 16.2 (534 aa).

WD repeat units follow at residues 243–281, 288–329, 330–368, 371–411, 413–452, 459–498, and 504–534; these read THDG…TDAS, GCLG…STFS, GHTD…CLKS, VGST…ATYS, ELGQ…IIHL, KTSC…LEKV, and SDSA…TLWR.

Belongs to the WD repeat tipD family. As to quaternary structure, homodimer (via N-terminus). Most likely a component of a complex at least containing atg-5, lgg-3, atg-16.1 and/or atg-16.2. Interacts (via N-terminus) with atg-16.1 (via N-terminus). Interacts (via N-terminus) with atg-5. Interacts (via WD 5-6 repeats) with lgg-2; the interaction is direct. Expressed in neurons, pharyngeal muscles, body wall muscle cells and intestinal cells.

The protein localises to the cytoplasm. It localises to the cell membrane. Functionally, most likely a component of the atg-5-atg-12-atg-16.1/atg-16.2 complex, which is recruited to the preautophagosomal membrane and associates with lgg-2 to promote autophagosome formation. Plays a role in the recruitment of lipidated lgg-1 probably to the autophagosome membrane to promote autophagosome formation. Furthermore, association with atg-5 is required for the nucleation of lgg-1 positive autophagosomes. Although its role in autophagosome formation may be distinct to the role of atg-16.2, it functions in a partially redundant manner with atg-16.1 to regulate autophagic processes. In a daf-18/PTEN- and daf-16/FOXO-dependent manner, required for maintaining the numbers of germ stem cell progenitors in the gonad during the late phases of larval development. In Caenorhabditis elegans, this protein is Autophagic-related protein 16.2.